A 555-amino-acid polypeptide reads, in one-letter code: MNPSTALATVLVDTLVRLGLRHLVLSPGSRSAPLAYAAARAADEGRLTLHVRVDERSAGFLALGLARAGELVAVVTTSGTAVANLHPAVLEAHHAGVPLVVLSADRPHELRGSGASQTADAQARMFLPSVRYSADVPAPVDPDRQAPAWRSLLSRAVAFARGLRGDGPGPVHLNVGFADPLTPSPGDVPPGPGLTQVHGPGAPAPVALERGPRTLVLAGDAPDPATGAAARELAESAGWPLLAEPSSGARGGERAVGPYRLLLDAVDAEGPLGAVERVVLFGHPTLSRPVTRLLARDDVELVVVSAAGTWSDAGFRAARVVPAAQVQGPPGAGEQEFAARWDRAGKLAADAVDAALDAEAGLSGPWAAREVVAACAADGSTLVVAASNAIRDVDLTARPLGVRTVSNRGLAGIDGTTATAEGVALATGPTRLLLGDLAFLHDANALLPVPGEVRPDLTVVVVNDDGGGIFETLEHASAVDRATFERVVATPHGVDVAALCAAFGVAHSRPATRAEALAALTARPRGLRVVELVTARDRVRPRLERIAAAVRAAVA.

This sequence belongs to the TPP enzyme family. MenD subfamily. In terms of assembly, homodimer. Requires Mg(2+) as cofactor. It depends on Mn(2+) as a cofactor. Thiamine diphosphate is required as a cofactor.

The enzyme catalyses isochorismate + 2-oxoglutarate + H(+) = 5-enolpyruvoyl-6-hydroxy-2-succinyl-cyclohex-3-ene-1-carboxylate + CO2. The protein operates within quinol/quinone metabolism; 1,4-dihydroxy-2-naphthoate biosynthesis; 1,4-dihydroxy-2-naphthoate from chorismate: step 2/7. It functions in the pathway quinol/quinone metabolism; menaquinone biosynthesis. In terms of biological role, catalyzes the thiamine diphosphate-dependent decarboxylation of 2-oxoglutarate and the subsequent addition of the resulting succinic semialdehyde-thiamine pyrophosphate anion to isochorismate to yield 2-succinyl-5-enolpyruvyl-6-hydroxy-3-cyclohexene-1-carboxylate (SEPHCHC). The sequence is that of 2-succinyl-5-enolpyruvyl-6-hydroxy-3-cyclohexene-1-carboxylate synthase from Kineococcus radiotolerans (strain ATCC BAA-149 / DSM 14245 / SRS30216).